We begin with the raw amino-acid sequence, 455 residues long: Probable circularly permuted 1,3-beta-glucanase TOS1 (455 aa).

An N-terminal signal peptide occupies residues 1-23 (MLQKLSMTALVGLFSSVVSLVNA). The segment at 158–221 (TADSTNTVVG…SSSSSSNTNG (64 aa)) is disordered. Positions 172-189 (SSYTKDSTVLSSSAQAVE) are enriched in polar residues. A compositionally biased stretch (low complexity) spans 190 to 219 (TSESQSSISSSKTTSSAAAASSSSSSSSNT). Asn236 carries an N-linked (GlcNAc...) asparagine glycan. The ExDxxE motif motif lies at 372–377 (EMDLFE). The N-linked (GlcNAc...) asparagine glycan is linked to Asn417.

The protein belongs to the PGA52 family.

The protein localises to the secreted. It localises to the cell wall. The catalysed reaction is Hydrolysis of (1-&gt;3)-beta-D-glucosidic linkages in (1-&gt;3)-beta-D-glucans.. Functionally, probable circularly permuted 1,3-beta-glucanase involved in cell wall modification through beta-1,3-glucan network alterations such as increased branching or remodeling. This chain is Probable circularly permuted 1,3-beta-glucanase TOS1, found in Saccharomyces cerevisiae (strain ATCC 204508 / S288c) (Baker's yeast).